The chain runs to 260 residues: Coiled-coil domain-containing protein 172 (260 aa).

Residues 13-194 (SEHQAEESRR…FEDKKHEAIC (182 aa)) are a coiled coil.

This sequence belongs to the CCDC172 family. In terms of assembly, may interact with TEKT2.

The protein localises to the cytoplasm. Its subcellular location is the cell projection. The protein resides in the cilium. The polypeptide is Coiled-coil domain-containing protein 172 (CCDC172) (Bos taurus (Bovine)).